A 338-amino-acid chain; its full sequence is Solute carrier family 35 member G3 (338 aa).

The interval 1 to 24 (MAGSHPYFNQPDSTHPSPPSAPPS) is disordered. Transmembrane regions (helical) follow at residues 37 to 57 (TSGLLVALLGGGLPAGFVGPL), 67 to 87 (LPSLELLIWRCLFHLPIALLL), 105 to 125 (FFCALLNILSIGCAYSAVQVV), 160 to 180 (CGLLGCILGLIIIVGPGLWTL), 185 to 205 (TGVYTALGYVEAFLGGLALSL), 221 to 241 (TVAFLSGLVGLLGSVPGLFVL), 250 to 270 (LLSWSCVGAVGILALVSFTCV), 281 to 301 (LVCAVLHSEVVVALILQYYML), and 305 to 325 (VAPSDIVAAGVVLGSIAIITA). The EamA 1 domain occupies 49 to 174 (LPAGFVGPLS…CILGLIIIVG (126 aa)). One can recognise an EamA 2 domain in the interval 272-325 (YAVTKAHPALVCAVLHSEVVVALILQYYMLHETVAPSDIVAAGVVLGSIAIITA).

It belongs to the SLC35G solute transporter family. As to expression, expressed in testis.

The protein resides in the membrane. The chain is Solute carrier family 35 member G3 (SLC35G3) from Homo sapiens (Human).